Reading from the N-terminus, the 229-residue chain is uncharacterized protein (229 aa).

In terms of domain architecture, ABC transporter spans 2 to 229 (LTLNNISKSY…LDERGDISHA (228 aa)). Position 38-45 (38-45 (GPSGSGKS)) interacts with ATP.

The protein belongs to the ABC transporter superfamily.

This is an uncharacterized protein from Bacillus subtilis (strain 168).